Consider the following 424-residue polypeptide: Tyrosine--tRNA ligase (424 aa).

Tyr-36 contributes to the L-tyrosine binding site. The short motif at 41 to 50 is the 'HIGH' region element; it reads PTAPSLHAGH. Tyr-171 and Gln-175 together coordinate L-tyrosine. A 'KMSKS' region motif is present at residues 231-235; it reads KFGKS. An ATP-binding site is contributed by Lys-234. The 58-residue stretch at 356–413 folds into the S4 RNA-binding domain; sequence DGIVDLLVASGLSASKGAARRTIHEGGVSVNNIRVDNEEWVPQSSDFLHGRWLVLRRG.

This sequence belongs to the class-I aminoacyl-tRNA synthetase family. TyrS type 1 subfamily. Homodimer.

Its subcellular location is the cytoplasm. It carries out the reaction tRNA(Tyr) + L-tyrosine + ATP = L-tyrosyl-tRNA(Tyr) + AMP + diphosphate + H(+). Its function is as follows. Catalyzes the attachment of tyrosine to tRNA(Tyr) in a two-step reaction: tyrosine is first activated by ATP to form Tyr-AMP and then transferred to the acceptor end of tRNA(Tyr). The protein is Tyrosine--tRNA ligase of Mycobacterium bovis (strain ATCC BAA-935 / AF2122/97).